The following is a 233-amino-acid chain: Small ribosomal subunit protein uS3 (233 aa).

Residues 39 to 107 (VRQFLMKTLE…PVQINISEVR (69 aa)) enclose the KH type-2 domain.

Belongs to the universal ribosomal protein uS3 family. Part of the 30S ribosomal subunit. Forms a tight complex with proteins S10 and S14.

Binds the lower part of the 30S subunit head. Binds mRNA in the 70S ribosome, positioning it for translation. This Buchnera aphidicola subsp. Acyrthosiphon pisum (strain APS) (Acyrthosiphon pisum symbiotic bacterium) protein is Small ribosomal subunit protein uS3.